We begin with the raw amino-acid sequence, 338 residues long: Mitochondrial E3 ubiquitin protein ligase 1 (338 aa).

Topologically, residues 1 to 3 (MEF) are cytoplasmic. Residues 4–24 (LHESVALGVDLLILGLCAREY) form a helical membrane-spanning segment. Residues 25–227 (VHYKRTAKVL…LIKRFEDAKT (203 aa)) lie on the Mitochondrial intermembrane side of the membrane. A helical transmembrane segment spans residues 228-248 (TTILKLVVCSTISAILVAFIA). Over 249–338 (KKLYRKRKQE…IVSKAAAFIA (90 aa)) the chain is Cytoplasmic. The RING-type zinc finger occupies 290–326 (CVVCSTNPKEIILLPCGHVCLCEDCAQKISVTCPVCR).

In terms of assembly, interacts with Marf. Auto-ubiquitinated.

The protein resides in the mitochondrion outer membrane. The enzyme catalyses S-ubiquitinyl-[E2 ubiquitin-conjugating enzyme]-L-cysteine + [acceptor protein]-L-lysine = [E2 ubiquitin-conjugating enzyme]-L-cysteine + N(6)-ubiquitinyl-[acceptor protein]-L-lysine.. Functionally, exhibits weak E3 ubiquitin-protein ligase activity. E3 ubiquitin ligases accept ubiquitin from an E2 ubiquitin-conjugating enzyme in the form of a thioester and then directly transfer the ubiquitin to targeted substrates. Plays a role in the control of mitochondrial morphology by promoting mitochondrial fission. Negatively regulates the mitochondrial fusion protein marf by promoting its ubiquitination, acting in a pathway that is parallel to the park/pink1 regulatory pathway. The polypeptide is Mitochondrial E3 ubiquitin protein ligase 1 (Drosophila melanogaster (Fruit fly)).